A 732-amino-acid chain; its full sequence is 1,4-alpha-glucan branching enzyme GlgB (732 aa).

The Nucleophile role is filled by Asp-412. The active-site Proton donor is Glu-465.

This sequence belongs to the glycosyl hydrolase 13 family. GlgB subfamily. Monomer.

The catalysed reaction is Transfers a segment of a (1-&gt;4)-alpha-D-glucan chain to a primary hydroxy group in a similar glucan chain.. The protein operates within glycan biosynthesis; glycogen biosynthesis. Catalyzes the formation of the alpha-1,6-glucosidic linkages in glycogen by scission of a 1,4-alpha-linked oligosaccharide from growing alpha-1,4-glucan chains and the subsequent attachment of the oligosaccharide to the alpha-1,6 position. This is 1,4-alpha-glucan branching enzyme GlgB from Pseudomonas aeruginosa (strain ATCC 15692 / DSM 22644 / CIP 104116 / JCM 14847 / LMG 12228 / 1C / PRS 101 / PAO1).